A 302-amino-acid chain; its full sequence is uncharacterized protein (302 aa).

9 consecutive transmembrane segments (helical) span residues 1 to 21, 33 to 53, 67 to 87, 101 to 121, 124 to 144, 185 to 205, 220 to 240, 253 to 273, and 274 to 294; these read MSWI…LGVI, SLLF…YIYY, FLIE…IFQF, FGII…IILI, FSWL…KTFY, YVTP…VFAI, IIYT…FCLA, LALI…IAIP, and AYIS…ASVI.

The protein belongs to the TerC family.

The protein localises to the cell membrane. This is an uncharacterized protein from Rickettsia bellii (strain RML369-C).